Reading from the N-terminus, the 469-residue chain is Histone acetyltransferase ESA1 (469 aa).

A disordered region spans residues M1–P26. Residues G11–E21 show a composition bias toward polar residues. The Tudor-knot domain maps to L39–L92. The segment at W98–N163 is disordered. A compositionally biased stretch (basic residues) spans E118–Q127. Polar residues-rich tracts occupy residues T130–A139 and L150–D160. In terms of domain architecture, MYST-type HAT spans A185–P457. The segment at I218–L243 adopts a C2HC MYST-type; degenerate zinc-finger fold. An N6-acetyllysine; by autocatalysis modification is found at K285. Acetyl-CoA is bound by residues A326–T330 and Q335–R341. Residue E361 is the Proton donor/acceptor of the active site. S365 lines the acetyl-CoA pocket.

It belongs to the MYST (SAS/MOZ) family. In terms of assembly, component of the NuA4 histone acetyltransferase complex. Post-translationally, autoacetylation at Lys-285 is required for proper function.

The protein resides in the nucleus. Its subcellular location is the chromosome. The enzyme catalyses L-lysyl-[histone] + acetyl-CoA = N(6)-acetyl-L-lysyl-[histone] + CoA + H(+). It carries out the reaction L-lysyl-[protein] + acetyl-CoA = N(6)-acetyl-L-lysyl-[protein] + CoA + H(+). It catalyses the reaction 2-hydroxyisobutanoyl-CoA + L-lysyl-[protein] = N(6)-(2-hydroxyisobutanoyl)-L-lysyl-[protein] + CoA + H(+). The catalysed reaction is (2E)-butenoyl-CoA + L-lysyl-[protein] = N(6)-(2E)-butenoyl-L-lysyl-[protein] + CoA + H(+). Catalytic component of the NuA4 histone acetyltransferase (HAT) complex which is involved in epigenetic transcriptional activation of selected genes principally by acetylation of nucleosomal histones H4, H3, H2B, H2A and H2A variant H2A.Z. Acetylates histone H4 to form H4K5ac, H4K8ac, H4K12ac and H4K16ac, histone H3 to form H3K14ac, and histone H2A to form H2AK4ac and H2AK7ac. The NuA4 complex is involved in the DNA damage response and is required for chromosome segregation. The NuA4 complex plays a direct role in repair of DNA double-strand breaks (DSBs) through homologous recombination. Recruitment to promoters depends on H3K4me. Also acetylates non-histone proteins. In addition to protein acetyltransferase, can use different acyl-CoA substrates, such as 2-hydroxyisobutanoyl-CoA (2-hydroxyisobutyryl-CoA) or (2E)-butenoyl-CoA (crotonyl-CoA), and is able to mediate protein 2-hydroxyisobutyrylation and crotonylation, respectively. The sequence is that of Histone acetyltransferase ESA1 (ESA1) from Yarrowia lipolytica (strain CLIB 122 / E 150) (Yeast).